Here is a 375-residue protein sequence, read N- to C-terminus: POU domain, class 3, transcription factor 1 (375 aa).

3 disordered regions span residues 1 to 29 (MAAT…RMHQ), 56 to 139 (MSLT…QPLI), and 151 to 200 (MLGP…PSSD). Composition is skewed to polar residues over residues 107 to 117 (VHQQTPSSHAW), 130 to 139 (PGSNSHQPLI), and 151 to 160 (MLGPQASSLH). The span at 162-171 (SMRDPLHDDP) shows a compositional bias: basic and acidic residues. A POU-specific domain is found at 194-268 (EDAPSSDDLE…LLNKWLEETD (75 aa)). Positions 286 to 345 (KRKKRTSIEVGVKGALENHFLKCPKPSAHEITSLADSLQLEKEVVRVWFCNRRQKEKRMT) form a DNA-binding region, homeobox.

The protein belongs to the POU transcription factor family. Class-3 subfamily.

It is found in the nucleus. Its function is as follows. Acts as a transcription factor. May play a role in neuronal differentiation. In Xenopus tropicalis (Western clawed frog), this protein is POU domain, class 3, transcription factor 1.